Consider the following 135-residue polypeptide: MSEFKRLMRLKLKMKQKRPEFKRQDWFKCSRIGTSWRRPFGKHSGMRIGLTHRAAVATVGYRGPALVRGLHPSGLQDILVNNVKELVALNPEIQGARIAATVGKRKRIEIVKKANELGIRVFNVSKQKQDEFLSL.

It belongs to the eukaryotic ribosomal protein eL32 family.

The protein is Large ribosomal subunit protein eL32 of Methanococcus maripaludis (strain C5 / ATCC BAA-1333).